A 205-amino-acid chain; its full sequence is Cytochrome c biogenesis ATP-binding export protein CcmA 1 (205 aa).

The region spanning 2–205 (LEARDLYCER…LALTGGEAGL (204 aa)) is the ABC transporter domain. ATP is bound at residue 34-41 (GGNGAGKT).

This sequence belongs to the ABC transporter superfamily. CcmA exporter (TC 3.A.1.107) family. In terms of assembly, the complex is composed of two ATP-binding proteins (CcmA) and two transmembrane proteins (CcmB).

It localises to the cell inner membrane. The catalysed reaction is heme b(in) + ATP + H2O = heme b(out) + ADP + phosphate + H(+). Functionally, part of the ABC transporter complex CcmAB involved in the biogenesis of c-type cytochromes; once thought to export heme, this seems not to be the case, but its exact role is uncertain. Responsible for energy coupling to the transport system. The chain is Cytochrome c biogenesis ATP-binding export protein CcmA 1 from Salmonella paratyphi A (strain ATCC 9150 / SARB42).